The sequence spans 517 residues: Amidophosphoribosyltransferase (517 aa).

N-acetylmethionine is present on M1. Positions M1–E11 are excised as a propeptide. Residue C12 is the Nucleophile of the active site. The region spanning C12–H261 is the Glutamine amidotransferase type-2 domain. C280 is a binding site for [4Fe-4S] cluster. S327, D389, and D390 together coordinate Mg(2+). The [4Fe-4S] cluster site is built by C426, C503, and C506.

In the C-terminal section; belongs to the purine/pyrimidine phosphoribosyltransferase family. Homotetramer. It depends on Mg(2+) as a cofactor. [4Fe-4S] cluster is required as a cofactor. As to expression, expressed at a high level in brain, heart, liver and stomach.

It carries out the reaction 5-phospho-beta-D-ribosylamine + L-glutamate + diphosphate = 5-phospho-alpha-D-ribose 1-diphosphate + L-glutamine + H2O. Its pathway is purine metabolism; IMP biosynthesis via de novo pathway; N(1)-(5-phospho-D-ribosyl)glycinamide from 5-phospho-alpha-D-ribose 1-diphosphate: step 1/2. Its activity is regulated as follows. Activated by the substrate 5-phospho-alpha-D-ribosyl-1-pyrophosphate and inhibited by the purine ribonucleotides, the end products of purine biosynthesis. Functionally, catalyzes the formation of phosphoribosylamine from phosphoribosylpyrophosphate (PRPP) and glutamine. The chain is Amidophosphoribosyltransferase (Ppat) from Rattus norvegicus (Rat).